Reading from the N-terminus, the 371-residue chain is Regulatory protein RapK (371 aa).

6 TPR repeats span residues 7 to 42, 93 to 130, 175 to 208, 215 to 248, 254 to 290, and 331 to 364; these read EVVA…FDEM, EYNF…IPDE, ATST…AKET, AQLF…ESWL, INSL…MENK, and DELS…EQKM.

The protein belongs to the Rap family.

Its subcellular location is the cytoplasm. Inhibited by PhrK, which prevents RapK-ComA interaction. Its function is as follows. Involved in the regulation of genetic competence development. Inhibits the activity of ComA, a transcriptional factor that regulates the development of genetic competence. Likely affects the activity of additional regulators, in particular Spo0A. This Bacillus subtilis (strain 168) protein is Regulatory protein RapK (rapK).